We begin with the raw amino-acid sequence, 113 residues long: UPF0122 protein LAF_1235 (113 aa).

Belongs to the UPF0122 family.

Functionally, might take part in the signal recognition particle (SRP) pathway. This is inferred from the conservation of its genetic proximity to ftsY/ffh. May be a regulatory protein. The sequence is that of UPF0122 protein LAF_1235 from Limosilactobacillus fermentum (strain NBRC 3956 / LMG 18251) (Lactobacillus fermentum).